The sequence spans 154 residues: Superoxide dismutase [Cu-Zn] (154 aa).

3 residues coordinate Cu cation: His47, His49, and His64. A disulfide bond links Cys58 and Cys147. Residues His64, His72, His81, and Asp84 each contribute to the Zn(2+) site. Residue His121 participates in Cu cation binding. Basic and acidic residues predominate over residues 125-137; the sequence is DDLGRSEHPESKK. The interval 125–144 is disordered; it reads DDLGRSEHPESKKTGNAGAR. Residue Arg144 coordinates substrate.

The protein belongs to the Cu-Zn superoxide dismutase family. In terms of assembly, homodimer. Requires Cu cation as cofactor. Zn(2+) serves as cofactor.

It localises to the cytoplasm. The catalysed reaction is 2 superoxide + 2 H(+) = H2O2 + O2. Destroys radicals which are normally produced within the cells and which are toxic to biological systems. This Aspergillus oryzae (strain ATCC 42149 / RIB 40) (Yellow koji mold) protein is Superoxide dismutase [Cu-Zn] (sodC).